A 141-amino-acid polypeptide reads, in one-letter code: Cystatin (141 aa).

An N-terminal signal peptide occupies residues 1–26; the sequence is MVHSQLPVAASLRLLCALLLLPSATM. Residues 29 to 129 form the Cystatin domain; the sequence is GGLSPRSVTD…CRFQVWSRPW (101 aa). The Secondary area of contact motif lies at 73–77; it reads QVVAG. Disulfide bonds link Cys91/Cys107 and Cys120/Cys140.

It belongs to the cystatin family. As to expression, expressed by the venom gland at an extremely low level (at protein level).

The protein localises to the secreted. Its function is as follows. Inhibits various C1 cysteine proteases including cathepsin L, papain and cathepsin B. This protein has no toxic activity and its function in the venom is unknown. It may play a role as a housekeeping or regulatory protein. The chain is Cystatin from Cryptophis nigrescens (Eastern small-eyed snake).